The sequence spans 394 residues: Elongation factor Tu (394 aa).

The tr-type G domain maps to 10–204 (KPHVNVGTIG…HLDSYIPEPE (195 aa)). Positions 19–26 (GHVDHGKT) are G1. Residue 19 to 26 (GHVDHGKT) coordinates GTP. Position 26 (Thr26) interacts with Mg(2+). Residues 60 to 64 (GITIN) are G2. A G3 region spans residues 81–84 (DCPG). GTP-binding positions include 81-85 (DCPGH) and 136-139 (NKCD). The tract at residues 136–139 (NKCD) is G4. Residues 174-176 (SAL) are G5.

Belongs to the TRAFAC class translation factor GTPase superfamily. Classic translation factor GTPase family. EF-Tu/EF-1A subfamily. In terms of assembly, monomer.

Its subcellular location is the cytoplasm. It catalyses the reaction GTP + H2O = GDP + phosphate + H(+). Its function is as follows. GTP hydrolase that promotes the GTP-dependent binding of aminoacyl-tRNA to the A-site of ribosomes during protein biosynthesis. This chain is Elongation factor Tu, found in Haemophilus ducreyi (strain 35000HP / ATCC 700724).